A 502-amino-acid chain; its full sequence is UDP-N-acetylmuramate--L-alanine ligase (502 aa).

119 to 125 (GSHGKST) serves as a coordination point for ATP.

This sequence belongs to the MurCDEF family.

It localises to the cytoplasm. It catalyses the reaction UDP-N-acetyl-alpha-D-muramate + L-alanine + ATP = UDP-N-acetyl-alpha-D-muramoyl-L-alanine + ADP + phosphate + H(+). Its pathway is cell wall biogenesis; peptidoglycan biosynthesis. In terms of biological role, cell wall formation. In Frankia casuarinae (strain DSM 45818 / CECT 9043 / HFP020203 / CcI3), this protein is UDP-N-acetylmuramate--L-alanine ligase.